Reading from the N-terminus, the 375-residue chain is Putative ZDHHC-type palmitoyltransferase 8 (375 aa).

2 helical membrane-spanning segments follow: residues 4–24 and 40–60; these read LFDFVVLSSFIILLPLVTDFL and VVGMILVFFIVSLIFAGVSLW. Residue N95 is glycosylated (N-linked (GlcNAc...) asparagine). 3 helical membrane passes run 105–125, 221–241, and 285–305; these read ITFYFHIFFTIQLVVNLYYYY, FILFIGYTVMALIYACYLSFF, and YSFIFLCCCLIVTASFGILLF. The DHHC domain maps to 176-226; it reads VSDGKWSTINKPKSHHCRICKRCIDSMDHHCPFAANCIGINNHHYFILFIG. The N-linked (GlcNAc...) asparagine glycan is linked to N343.

It belongs to the DHHC palmitoyltransferase family.

The protein resides in the membrane. It carries out the reaction L-cysteinyl-[protein] + hexadecanoyl-CoA = S-hexadecanoyl-L-cysteinyl-[protein] + CoA. In Dictyostelium discoideum (Social amoeba), this protein is Putative ZDHHC-type palmitoyltransferase 8.